Consider the following 312-residue polypeptide: Glyoxylate/hydroxypyruvate reductase A (312 aa).

The active site involves Arg-227. The active-site Proton donor is His-275.

It belongs to the D-isomer specific 2-hydroxyacid dehydrogenase family. GhrA subfamily.

The protein resides in the cytoplasm. The catalysed reaction is glycolate + NADP(+) = glyoxylate + NADPH + H(+). It catalyses the reaction (R)-glycerate + NAD(+) = 3-hydroxypyruvate + NADH + H(+). It carries out the reaction (R)-glycerate + NADP(+) = 3-hydroxypyruvate + NADPH + H(+). Catalyzes the NADPH-dependent reduction of glyoxylate and hydroxypyruvate into glycolate and glycerate, respectively. The chain is Glyoxylate/hydroxypyruvate reductase A from Klebsiella pneumoniae (strain 342).